The chain runs to 874 residues: MKSAEIREAFLRFFEEQGHTRVASSSLIPNNDPTLLFTNAGMNQFKDCFLGAEKRAYTRAVSSQKCVRAGGKHNDLENVGYTARHHTFFEMLGNFSFGDYFKRDAITFAWTFLTSDKWLNLPKEKLWVTVYASDDEAYDIWTKEVGVPAERMVRIGDNKGAPYASDNFWTMGDTGPCGPCTEIFYDHGADIWGGPPGSPEEDGDRYIEIWNNVFMQFNRTADGVLHPLPAPSVDTGMGLERISAVMQHVHSNYEIDLFQNLLSAAAKAIGCSNDGQASLKVVADHIRSCGFLIADGVLPSNEGRGYVLRRIIRRACRHGNKLGAKGSFFYQIVAALAAEMGEAFPELKSQQAHIERVLKAEEEQFAKTLEQGLRILEQDLAQLKGDVVPGDVVFKLYDTYGFPMDLTADIARERELTIDEAGFEREMDAQRERARSASAFGMDYNSLVKVDTATDFVGYNATEGQGKVIALYKDGQSVDQLGEGEQGVVVLDRTPFYAESGGQVGDTGYLQSGAVRFDVQDTTKTGGAFLHHGVVASGALVIGSPVEAKVDADVQHATSLNHSATHLLHEALRQVLGEHVQQKGSLVDSQRLRFDFSHFEAVTPAQIKALEDIVNREVRKNTPVETEITDIETAKRKGAMALFGEKYGDTVRVLSMGGDFSVELCGGIHAKRTGDISLFKIISEGGVASGVRRIEAVTGAAALAYLNAAEEQVKEAAQLIKGNRDNLIDKLSAVLERNRQLEKQLEQLQAKAASAAGDDLSSAAVEVKGAKVLAARLDGQDGKALLALVDQLKNKLGHAVILLGSEHEGKVVLVAGVTKDLSSQLKAGDLMKQAAAAVGGKGGGRPDMAQGGGVDVAALDQALALAVPFAEQGL.

H562, H566, C665, and H669 together coordinate Zn(2+).

Belongs to the class-II aminoacyl-tRNA synthetase family. It depends on Zn(2+) as a cofactor.

Its subcellular location is the cytoplasm. It carries out the reaction tRNA(Ala) + L-alanine + ATP = L-alanyl-tRNA(Ala) + AMP + diphosphate. Its function is as follows. Catalyzes the attachment of alanine to tRNA(Ala) in a two-step reaction: alanine is first activated by ATP to form Ala-AMP and then transferred to the acceptor end of tRNA(Ala). Also edits incorrectly charged Ser-tRNA(Ala) and Gly-tRNA(Ala) via its editing domain. The polypeptide is Alanine--tRNA ligase (Pseudomonas putida (strain W619)).